The following is a 167-amino-acid chain: MEVEVGQIVNTHGIKGEVKVKSNSDFTETRFQPGEQLLVKHNNTEIVYTVASYRIHKGFHMLRFEGINNINEIEHLKGDYIYQERDHQDIELGEHEYYYSDIIGCTVFKDDDTPIGRVINIFETGANDVWVVKGEKEYLIPYIEDVVKDIDIETKTIKITPMEGLLD.

Positions 94–165 (EHEYYYSDII…TIKITPMEGL (72 aa)) constitute a PRC barrel domain.

Belongs to the RimM family. As to quaternary structure, binds ribosomal protein uS19.

The protein localises to the cytoplasm. Its function is as follows. An accessory protein needed during the final step in the assembly of 30S ribosomal subunit, possibly for assembly of the head region. Essential for efficient processing of 16S rRNA. May be needed both before and after RbfA during the maturation of 16S rRNA. It has affinity for free ribosomal 30S subunits but not for 70S ribosomes. The sequence is that of Ribosome maturation factor RimM from Staphylococcus epidermidis (strain ATCC 12228 / FDA PCI 1200).